We begin with the raw amino-acid sequence, 23 residues long: Potassium channel toxin alpha-KTx 13.3 (23 aa).

Intrachain disulfides connect Cys-2–Cys-15, Cys-5–Cys-20, and Cys-9–Cys-22. Residues 13–20 (GKCINGRC) form an interaction with Ca(2+)-activated K(+) channels region. Tyr-23 is modified (tyrosine amide).

Expressed by the venom gland.

The protein resides in the secreted. Reversibly blocks Shaker B potassium channels, with a dissociation constant of 200 nM. This chain is Potassium channel toxin alpha-KTx 13.3, found in Tityus pachyurus (Colombian scorpion).